Here is a 313-residue protein sequence, read N- to C-terminus: Pyrimidine-specific ribonucleoside hydrolase RihB (313 aa).

The active-site Proton acceptor is Asp-11. Residues Asp-11, Asp-16, and Val-124 each contribute to the Ca(2+) site. Gln-227 and His-239 together coordinate substrate. A Ca(2+)-binding site is contributed by Asp-240.

The protein belongs to the IUNH family. RihB subfamily. In terms of assembly, homotetramer. Ca(2+) is required as a cofactor.

It catalyses the reaction a pyrimidine ribonucleoside + H2O = a pyrimidine nucleobase + D-ribose. Its function is as follows. Hydrolyzes cytidine or uridine to ribose and cytosine or uracil, respectively. Has a clear preference for cytidine over uridine. Strictly specific for ribonucleosides. This Escherichia coli O17:K52:H18 (strain UMN026 / ExPEC) protein is Pyrimidine-specific ribonucleoside hydrolase RihB.